Consider the following 113-residue polypeptide: Protein NATD1 (113 aa).

A compositionally biased stretch (low complexity) spans 1–16 (MAQSPAAASPGAPEQG). Residues 1 to 20 (MAQSPAAASPGAPEQGCPIR) form a disordered region. Residues 22 to 112 (EHDRRRRQFT…PLPQYLERLQ (91 aa)) form the N-acetyltransferase domain.

Belongs to the NATD1 family.

The protein is Protein NATD1 (NATD1) of Bos taurus (Bovine).